The following is a 590-amino-acid chain: Aspartate--tRNA(Asp/Asn) ligase (590 aa).

Glutamate 172 contributes to the L-aspartate binding site. Positions 196-199 (QLFK) are aspartate. L-aspartate is bound at residue arginine 218. ATP-binding positions include 218–220 (RDE) and glutamine 227. Histidine 449 contacts L-aspartate. Glutamate 484 is a binding site for ATP. Arginine 491 serves as a coordination point for L-aspartate. Position 536–539 (536–539 (GIDR)) interacts with ATP.

The protein belongs to the class-II aminoacyl-tRNA synthetase family. Type 1 subfamily. As to quaternary structure, homodimer.

Its subcellular location is the cytoplasm. The enzyme catalyses tRNA(Asx) + L-aspartate + ATP = L-aspartyl-tRNA(Asx) + AMP + diphosphate. Aspartyl-tRNA synthetase with relaxed tRNA specificity since it is able to aspartylate not only its cognate tRNA(Asp) but also tRNA(Asn). Reaction proceeds in two steps: L-aspartate is first activated by ATP to form Asp-AMP and then transferred to the acceptor end of tRNA(Asp/Asn). This Francisella tularensis subsp. tularensis (strain SCHU S4 / Schu 4) protein is Aspartate--tRNA(Asp/Asn) ligase.